The primary structure comprises 187 residues: UPF0301 protein VV2869 (187 aa).

This sequence belongs to the UPF0301 (AlgH) family.

In Vibrio vulnificus (strain YJ016), this protein is UPF0301 protein VV2869.